The chain runs to 100 residues: Urease subunit gamma (100 aa).

It belongs to the urease gamma subunit family. Heterotrimer of UreA (gamma), UreB (beta) and UreC (alpha) subunits. Three heterotrimers associate to form the active enzyme.

The protein localises to the cytoplasm. The enzyme catalyses urea + 2 H2O + H(+) = hydrogencarbonate + 2 NH4(+). The protein operates within nitrogen metabolism; urea degradation; CO(2) and NH(3) from urea (urease route): step 1/1. The polypeptide is Urease subunit gamma (Mycobacterium sp. (strain JLS)).